Consider the following 632-residue polypeptide: Basic helix-loop-helix ARNT-like protein 1 (632 aa).

A disordered region spans residues 1-39 (MADQRMDISSTISDFMSPGPTDLLSGSLGTSGVDCNRKR). The residue at position 17 (serine 17) is a Phosphoserine; by GSK3-beta. Threonine 21 is subject to Phosphothreonine; by GSK3-beta. The Nuclear localization signal signature appears at 36–41 (NRKRKG). The bHLH domain occupies 79–132 (NAREAHSQIEKRRRDKMNSFIDELASLVPTCNAMSRKLDKLTVLRMAVQHMKTL). Residue serine 85 is modified to Phosphoserine. Position 97 is a phosphoserine; by CK2 (serine 97). Residues 149–159 (LSDDELKHLIL) carry the Nuclear export signal 1 motif. Residues 150–222 (SDDELKHLIL…EQLSSSDTAP (73 aa)) enclose the PAS 1 domain. A Glycyl lysine isopeptide (Lys-Gly) (interchain with G-Cter in SUMO2 and SUMO3) cross-link involves residue lysine 259. Residue lysine 266 forms a Glycyl lysine isopeptide (Lys-Gly) (interchain with G-Cter in SUMO); alternate linkage. Lysine 266 is covalently cross-linked (Glycyl lysine isopeptide (Lys-Gly) (interchain with G-Cter in SUMO2); alternate). In terms of domain architecture, PAS 2 spans 333–403 (QPANGEIRVK…CHRQVLQTRE (71 aa)). Residues 367 to 375 (LAYLPQELL) carry the Nuclear export signal 2 motif. Residues 408–451 (NCYKFKIKDGSFITLRSRWFSFMNPWTKEVEYIVSTNTVVLANV) form the PAC domain. Disordered regions lie at residues 465–498 (PPHSMDSMLPSGEGGPKRTHPTVPGIPGGTRAGA) and 517–601 (GSSP…SPSN). The interval 514–594 (RIRGSSPSSC…IGIDMIDNDQ (81 aa)) is interaction with CIART. Residues 517-527 (GSSPSSCGSSP) show a composition bias toward low complexity. Position 544 is an N6-acetyllysine (lysine 544).

As to quaternary structure, component of the circadian clock oscillator which includes the CRY1/2 proteins, CLOCK or NPAS2, BMAL1 or BMAL2, CSNK1D and/or CSNK1E, TIMELESS and the PER1/2/3 proteins. Forms a heterodimer with CLOCK. The CLOCK-BMAL1 heterodimer is required for E-box-dependent transactivation, for CLOCK nuclear translocation and degradation, and, for phosphorylation of both CLOCK and BMAL1. Part of a nuclear complex which also includes RACK1 and PRKCA; RACK1 and PRKCA are recruited to the complex in a circadian manner. Interacts with NPAS2. Interacts with EZH2. Interacts with SUMO3. Interacts with SIRT1. Interacts with AHR. Interacts with ID1, ID2 and ID3. Interacts with DDX4. Interacts with OGT. Interacts with EED and SUZ12. Interacts with MTA1. Interacts with CIART. Interacts with HSP90. Interacts with KAT2B and EP300. Interacts with BHLHE40/DEC1 and BHLHE41/DEC2. Interacts with RELB and the interaction is enhanced in the presence of CLOCK. Interacts with PER1, PER2, CRY1 and CRY2 and this interaction requires a translocation to the nucleus. Interaction of the CLOCK-BMAL1 heterodimer with PER or CRY inhibits transcription activation. Interaction of the CLOCK-BMAL1 with CRY1 is independent of DNA but with PER2 is off DNA. The CLOCK-BMAL1 heterodimer interacts with GSK3B. Interacts with KDM5A. Interacts with KMT2A; in a circadian manner. Interacts with UBE3A. Interacts with PRKCG. Interacts with MAGEL2. Interacts with NCOA2. Interacts with THRAP3. The CLOCK-BMAL1 heterodimer interacts with PASD1. Interacts with PASD1. Interacts with USP9X. Interacts with PIWIL2 (via PIWI domain). Interacts with HDAC3. Interacts with HNF4A. Post-translationally, ubiquitinated, leading to its proteasomal degradation. Deubiquitinated by USP9X. In terms of processing, O-glycosylated; contains O-GlcNAc. O-glycosylation by OGT prevents protein degradation by inhibiting ubiquitination. It also stabilizes the CLOCK-BMAL1 heterodimer thereby increasing CLOCK-BMAL1-mediated transcription of genes in the negative loop of the circadian clock such as PER1/2/3 and CRY1/2. Acetylated on Lys-544 by CLOCK during the repression phase of the circadian cycle. Acetylation facilitates recruitment of CRY1 protein and initiates the repression phase of the circadian cycle. Acetylated at Lys-544 by KAT5 during the activation phase of the cycle, leading to recruitment of the positive transcription elongation factor b (P-TEFb) and BRD4, followed by productive elongation of circadian transcripts. Deacetylated by SIRT1, which may result in decreased protein stability. Post-translationally, phosphorylated upon dimerization with CLOCK. Phosphorylation enhances the transcriptional activity, alters the subcellular localization and decreases the stability of the CLOCK-BMAL1 heterodimer by promoting its degradation. Phosphorylation shows circadian variations in the liver with a peak between CT10 to CT14. Phosphorylation at Ser-97 by CK2 is essential for its nuclear localization, its interaction with CLOCK and controls CLOCK nuclear entry. Dephosphorylation at Ser-85 is important for dimerization with CLOCK and transcriptional activity. In terms of processing, sumoylated on Lys-266 upon dimerization with CLOCK. Predominantly conjugated to poly-SUMO2/3 rather than SUMO1 and the level of these conjugates undergo rhythmic variation, peaking at CT9-CT12. Sumoylation localizes it exclusively to the PML body and promotes its ubiquitination in the PML body, ubiquitin-dependent proteasomal degradation and the transcriptional activity of the CLOCK-BMAL1 heterodimer. Undergoes lysosome-mediated degradation in a time-dependent manner in the liver. In terms of tissue distribution, expressed in liver and testis (at protein level). Expressed in the suprachiasmatic nucleus (SCN) in a circadian manner.

Its subcellular location is the nucleus. It is found in the cytoplasm. The protein localises to the PML body. With respect to regulation, the redox state of the cell can modulate the transcriptional activity of the CLOCK-BMAL1 and NPAS2-BMAL1 heterodimers; NADH and NADPH enhance the DNA-binding activity of the heterodimers. Its function is as follows. Transcriptional activator which forms a core component of the circadian clock. The circadian clock, an internal time-keeping system, regulates various physiological processes through the generation of approximately 24 hour circadian rhythms in gene expression, which are translated into rhythms in metabolism and behavior. It is derived from the Latin roots 'circa' (about) and 'diem' (day) and acts as an important regulator of a wide array of physiological functions including metabolism, sleep, body temperature, blood pressure, endocrine, immune, cardiovascular, and renal function. Consists of two major components: the central clock, residing in the suprachiasmatic nucleus (SCN) of the brain, and the peripheral clocks that are present in nearly every tissue and organ system. Both the central and peripheral clocks can be reset by environmental cues, also known as Zeitgebers (German for 'timegivers'). The predominant Zeitgeber for the central clock is light, which is sensed by retina and signals directly to the SCN. The central clock entrains the peripheral clocks through neuronal and hormonal signals, body temperature and feeding-related cues, aligning all clocks with the external light/dark cycle. Circadian rhythms allow an organism to achieve temporal homeostasis with its environment at the molecular level by regulating gene expression to create a peak of protein expression once every 24 hours to control when a particular physiological process is most active with respect to the solar day. Transcription and translation of core clock components (CLOCK, NPAS2, BMAL1, BMAL2, PER1, PER2, PER3, CRY1 and CRY2) plays a critical role in rhythm generation, whereas delays imposed by post-translational modifications (PTMs) are important for determining the period (tau) of the rhythms (tau refers to the period of a rhythm and is the length, in time, of one complete cycle). A diurnal rhythm is synchronized with the day/night cycle, while the ultradian and infradian rhythms have a period shorter and longer than 24 hours, respectively. Disruptions in the circadian rhythms contribute to the pathology of cardiovascular diseases, cancer, metabolic syndromes and aging. A transcription/translation feedback loop (TTFL) forms the core of the molecular circadian clock mechanism. Transcription factors, CLOCK or NPAS2 and BMAL1 or BMAL2, form the positive limb of the feedback loop, act in the form of a heterodimer and activate the transcription of core clock genes and clock-controlled genes (involved in key metabolic processes), harboring E-box elements (5'-CACGTG-3') within their promoters. The core clock genes: PER1/2/3 and CRY1/2 which are transcriptional repressors form the negative limb of the feedback loop and interact with the CLOCK|NPAS2-BMAL1|BMAL2 heterodimer inhibiting its activity and thereby negatively regulating their own expression. This heterodimer also activates nuclear receptors NR1D1/2 and RORA/B/G, which form a second feedback loop and which activate and repress BMAL1 transcription, respectively. BMAL1 positively regulates myogenesis and negatively regulates adipogenesis via the transcriptional control of the genes of the canonical Wnt signaling pathway. Plays a role in normal pancreatic beta-cell function; regulates glucose-stimulated insulin secretion via the regulation of antioxidant genes NFE2L2/NRF2 and its targets SESN2, PRDX3, CCLC and CCLM. Negatively regulates the mTORC1 signaling pathway; regulates the expression of MTOR and DEPTOR. Controls diurnal oscillations of Ly6C inflammatory monocytes; rhythmic recruitment of the PRC2 complex imparts diurnal variation to chemokine expression that is necessary to sustain Ly6C monocyte rhythms. Regulates the expression of HSD3B2, STAR, PTGS2, CYP11A1, CYP19A1 and LHCGR in the ovary and also the genes involved in hair growth. Plays an important role in adult hippocampal neurogenesis by regulating the timely entry of neural stem/progenitor cells (NSPCs) into the cell cycle and the number of cell divisions that take place prior to cell-cycle exit. Regulates the circadian expression of CIART and KLF11. The CLOCK-BMAL1 heterodimer regulates the circadian expression of SERPINE1/PAI1, VWF, B3, CCRN4L/NOC, NAMPT, DBP, MYOD1, PPARGC1A, PPARGC1B, SIRT1, GYS2, F7, NGFR, GNRHR, BHLHE40/DEC1, ATF4, MTA1, KLF10 and also genes implicated in glucose and lipid metabolism. Promotes rhythmic chromatin opening, regulating the DNA accessibility of other transcription factors. May play a role in spermatogenesis; contributes to the chromatoid body assembly and physiology. The NPAS2-BMAL1 heterodimer positively regulates the expression of MAOA, F7 and LDHA and modulates the circadian rhythm of daytime contrast sensitivity by regulating the rhythmic expression of adenylate cyclase type 1 (ADCY1) in the retina. The preferred binding motif for the CLOCK-BMAL1 heterodimer is 5'-CACGTGA-3', which contains a flanking adenine nucleotide at the 3-prime end of the canonical 6-nucleotide E-box sequence. CLOCK specifically binds to the half-site 5'-CAC-3', while BMAL1 binds to the half-site 5'-GTGA-3'. The CLOCK-BMAL1 heterodimer also recognizes the non-canonical E-box motifs 5'-AACGTGA-3' and 5'-CATGTGA-3'. Essential for the rhythmic interaction of CLOCK with ASS1 and plays a critical role in positively regulating CLOCK-mediated acetylation of ASS1. Plays a role in protecting against lethal sepsis by limiting the expression of immune checkpoint protein CD274 in macrophages in a PKM2-dependent manner. Regulates the diurnal rhythms of skeletal muscle metabolism via transcriptional activation of genes promoting triglyceride synthesis (DGAT2) and metabolic efficiency (COQ10B). This is Basic helix-loop-helix ARNT-like protein 1 (Bmal1) from Mus musculus (Mouse).